The primary structure comprises 150 residues: 3-dehydroquinate dehydratase (150 aa).

The Proton acceptor role is filled by Tyr26. 3 residues coordinate substrate: Asn77, His83, and Asp90. His103 (proton donor) is an active-site residue. Substrate contacts are provided by residues 104–105 (LS) and Arg114.

The protein belongs to the type-II 3-dehydroquinase family. Homododecamer.

It carries out the reaction 3-dehydroquinate = 3-dehydroshikimate + H2O. Its pathway is metabolic intermediate biosynthesis; chorismate biosynthesis; chorismate from D-erythrose 4-phosphate and phosphoenolpyruvate: step 3/7. Functionally, catalyzes a trans-dehydration via an enolate intermediate. This chain is 3-dehydroquinate dehydratase, found in Histophilus somni (strain 129Pt) (Haemophilus somnus).